Reading from the N-terminus, the 250-residue chain is DNA repair protein RecO (250 aa).

It belongs to the RecO family.

Involved in DNA repair and RecF pathway recombination. The polypeptide is DNA repair protein RecO (Granulibacter bethesdensis (strain ATCC BAA-1260 / CGDNIH1)).